Reading from the N-terminus, the 130-residue chain is Small ribosomal subunit protein uS11 (130 aa).

The protein belongs to the universal ribosomal protein uS11 family. In terms of assembly, part of the 30S ribosomal subunit. Interacts with proteins S7 and S18. Binds to IF-3.

Functionally, located on the platform of the 30S subunit, it bridges several disparate RNA helices of the 16S rRNA. Forms part of the Shine-Dalgarno cleft in the 70S ribosome. The sequence is that of Small ribosomal subunit protein uS11 from Sulfurimonas denitrificans (strain ATCC 33889 / DSM 1251) (Thiomicrospira denitrificans (strain ATCC 33889 / DSM 1251)).